We begin with the raw amino-acid sequence, 336 residues long: MFDLSRLSRGIVPMALLLLGISACTPSQTSQSIAINGSSTVYPITEAIVADFSGGKKGVDIDVEFSGTGGGFKLFCEGKTDIADASRPINKQEMKLCNDNQVRYVELPIAFDAITVVSNPKNDWLKSLTVEELKRIWEPAAEKTLTRWNQVRPEFPDQPINLYSPGEDSGTFDYFTEAIVGQAGASRLDTLKSEDDEILVQGVVQDLYSLGYFGFAYYEGRIADLKAIGVDNGRGPVLPSRETVEKSEYQPLSRPLFIYVNATKAQDNPALREFVDFYLANASATATKVGYIPLPEEAYNLGKISFNKGEVGTVFGGESVMDLTIGELLKKQASFE.

The N-terminal stretch at 1-27 is a signal peptide; it reads MFDLSRLSRGIVPMALLLLGISACTPS.

It belongs to the PstS family.

Its function is as follows. May be involved in the system for phosphate transport across the cytoplasmic membrane. The chain is Protein SphX (sphX) from Synechocystis sp. (strain ATCC 27184 / PCC 6803 / Kazusa).